Reading from the N-terminus, the 467-residue chain is Translation initiation factor eIF2B subunit delta (467 aa).

Positions M1–D106 are disordered. A phosphoserine mark is found at S16, S19, S21, and S23. Over residues S16 to S37 the composition is skewed to polar residues. T27 bears the Phosphothreonine mark. 2 positions are modified to phosphoserine: S28 and S37. Positions L51–R61 are enriched in basic residues. Residues P84 to S102 show a composition bias toward low complexity.

It belongs to the eIF-2B alpha/beta/delta subunits family. Component of the translation initiation factor 2B (eIF2B) complex which is a heterodecamer of two sets of five different subunits: alpha, beta, gamma, delta and epsilon. Subunits alpha, beta and delta comprise a regulatory subcomplex and subunits epsilon and gamma comprise a catalytic subcomplex. Within the complex, the hexameric regulatory complex resides at the center, with the two heterodimeric catalytic subcomplexes bound on opposite sides.

It localises to the cytoplasm. It is found in the cytosol. Its function is as follows. Acts as a component of the translation initiation factor 2B (eIF2B) complex, which catalyzes the exchange of GDP for GTP on the eukaryotic initiation factor 2 (eIF2) complex gamma subunit. Its guanine nucleotide exchange factor activity is repressed when bound to eIF2 complex phosphorylated on the alpha subunit, thereby limiting the amount of methionyl-initiator methionine tRNA available to the ribosome and consequently global translation is repressed. This is Translation initiation factor eIF2B subunit delta (tif224) from Schizosaccharomyces pombe (strain 972 / ATCC 24843) (Fission yeast).